We begin with the raw amino-acid sequence, 214 residues long: Ribosomal RNA small subunit methyltransferase G (214 aa).

Residues G77, L82, V128 to E129, and R143 contribute to the S-adenosyl-L-methionine site.

It belongs to the methyltransferase superfamily. RNA methyltransferase RsmG family.

The protein resides in the cytoplasm. The enzyme catalyses guanosine(527) in 16S rRNA + S-adenosyl-L-methionine = N(7)-methylguanosine(527) in 16S rRNA + S-adenosyl-L-homocysteine. In terms of biological role, specifically methylates the N7 position of guanine in position 527 of 16S rRNA. This chain is Ribosomal RNA small subunit methyltransferase G, found in Nitrosomonas eutropha (strain DSM 101675 / C91 / Nm57).